The sequence spans 757 residues: Two pore calcium channel protein 1 (757 aa).

Topologically, residues 1–94 are cytoplasmic; it reads MRERGEMREA…NDTRFERAMR (94 aa). The segment at 24 to 48 is disordered; it reads HSHGSGSSGTGSHTSGGGGGWRGSR. Residues 29–45 are compositionally biased toward gly residues; the sequence is GSSGTGSHTSGGGGGWR. Residues 95 to 115 form a helical membrane-spanning segment; the sequence is FYFVYLRLDWLWSLNLFALIL. Residues 116 to 152 are Extracellular-facing; it reads LNFLEKPLWCRGYSQHACDQRDLYFLGQLPYLSKTES. A helical membrane pass occupies residues 153–173; the sequence is LIYEGLTLVILVMDIFYPLSY. The Cytoplasmic segment spans residues 174-188; it reads EGLNLFWKNTINKLK. A helical transmembrane segment spans residues 189-209; that stretch reads VLLLFILACDILVFAFSPQPF. Position 210 (Arg-210) is a topological domain, extracellular. The helical; Voltage-sensor transmembrane segment at 211-228 threads the bilayer; the sequence is VAPYIRVAFLIMNIRELR. The Cytoplasmic segment spans residues 229 to 233; that stretch reads MCAVT. Residues 234–254 form a helical membrane-spanning segment; the sequence is LVGMVGTYLNVLALSLLFLLF. The Extracellular segment spans residues 255-270; that stretch reads ASWLAYVTFEDTPQGK. Residues 271–285 constitute an intramembrane region (pore-forming); that stretch reads TVFSSYGTTLYQMFI. Topologically, residues 286-308 are extracellular; the sequence is LFTTSNNPDVWVPAYKSSRWSSL. The helical transmembrane segment at 309–329 threads the bilayer; it reads FFIVYVLLGVYFLTNLILAVI. Over 330–453 the chain is Cytoplasmic; the sequence is YDSFKEQLAK…LCEWLKSFVR (124 aa). EF-hand domains follow at residues 347–382 and 388–423; these read TRKSILEKAFGIIDATGQGYLNKEQCLSLLDELNKY and TSREDFELIFAELDQSGDFKVTSEEFATLCNTIAIK. Residues 454–474 traverse the membrane as a helical segment; sequence SPLFEYIVIFVLLMNLVAVII. Residues 475-493 lie on the Extracellular side of the membrane; sequence ETTLDIENSSSQKVWQEVE. Asn-482 is a glycosylation site (N-linked (GlcNAc...) asparagine). A helical membrane pass occupies residues 494–514; sequence FVFGWIYVIEMALKIFSLGFG. The Cytoplasmic segment spans residues 515–523; sequence AYWMEGQNK. A helical membrane pass occupies residues 524–544; it reads FDFVLTWTIFIGETLTFAFPS. Topologically, residues 545-553 are extracellular; that stretch reads KLSFLSNGE. A helical; Voltage-sensor transmembrane segment spans residues 554 to 571; that stretch reads WIRYLLLGRMLRLTRILL. The Cytoplasmic portion of the chain corresponds to 572-595; it reads QVRRFRAFVATFFTLMSSLMPYLG. A helical membrane pass occupies residues 596–616; it reads IVFCTLCIYCSLGLQIFGGIV. The Extracellular portion of the chain corresponds to 617-640; that stretch reads YAGNPTLEETDLFSNDYLLFNFND. An intramembrane region (pore-forming) is located at residues 641–655; it reads YPSGMVTLFNLLVMG. The Extracellular segment spans residues 656–676; sequence NWQAWMESYRQLTGSYWSLIY. The chain crosses the membrane as a helical span at residues 677–697; it reads FVSFYLISVLLLLNLIVAFVL. Residues 698–757 lie on the Cytoplasmic side of the membrane; sequence EAFFAEMELEKDGEADIQDPTLEGRNRRRSVRVRTKGTMVDILLHHMLSNELDGSQNRDQ.

It belongs to the calcium channel alpha-1 subunit (TC 1.A.1.11) family. Two pore calcium channel subfamily. As to quaternary structure, homodimer. In terms of tissue distribution, expressed in shoot, mature leaf, cultured cells, and at lower level in roots.

Its subcellular location is the membrane. Its activity is regulated as follows. Inhibited by the VDCC blocker verapamil in yeast cells. Channel activity may be down-regulated by cytosolic Ca(2+) in rice cells. Inhibited by Al(3+). Functionally, may function as one of the major voltage-gated Ca(2+) channel (VDCC) across the plasma membrane. May be involved in the regulation of cytosolic Ca(2+) and in growth and development. Acts as the major ROS-responsive Ca(2+) channel and is the possible target of Al-dependent inhibition. Determines sensitivity to T.viride xylanase elicitor. Plays a regulatory role in elicitor-induced defense responses and hypersensitive cell death. The chain is Two pore calcium channel protein 1 (TPC1) from Oryza sativa subsp. japonica (Rice).